The primary structure comprises 449 residues: UDP-N-acetylmuramoylalanine--D-glutamate ligase (449 aa).

Residue 113–119 (GTNGKTT) participates in ATP binding.

This sequence belongs to the MurCDEF family.

The protein localises to the cytoplasm. It carries out the reaction UDP-N-acetyl-alpha-D-muramoyl-L-alanine + D-glutamate + ATP = UDP-N-acetyl-alpha-D-muramoyl-L-alanyl-D-glutamate + ADP + phosphate + H(+). Its pathway is cell wall biogenesis; peptidoglycan biosynthesis. Functionally, cell wall formation. Catalyzes the addition of glutamate to the nucleotide precursor UDP-N-acetylmuramoyl-L-alanine (UMA). The polypeptide is UDP-N-acetylmuramoylalanine--D-glutamate ligase (Microcystis aeruginosa (strain NIES-843 / IAM M-2473)).